A 285-amino-acid polypeptide reads, in one-letter code: 2,3,4,5-tetrahydropyridine-2,6-dicarboxylate N-succinyltransferase (285 aa).

Substrate contacts are provided by Arg111 and Asp148.

It belongs to the transferase hexapeptide repeat family. Homotrimer.

The protein localises to the cytoplasm. It catalyses the reaction (S)-2,3,4,5-tetrahydrodipicolinate + succinyl-CoA + H2O = (S)-2-succinylamino-6-oxoheptanedioate + CoA. Its pathway is amino-acid biosynthesis; L-lysine biosynthesis via DAP pathway; LL-2,6-diaminopimelate from (S)-tetrahydrodipicolinate (succinylase route): step 1/3. The chain is 2,3,4,5-tetrahydropyridine-2,6-dicarboxylate N-succinyltransferase from Rhizobium rhizogenes (strain K84 / ATCC BAA-868) (Agrobacterium radiobacter).